The chain runs to 98 residues: Small ribosomal subunit protein uS17 (98 aa).

Belongs to the universal ribosomal protein uS17 family. As to quaternary structure, part of the 30S ribosomal subunit.

Functionally, one of the primary rRNA binding proteins, it binds specifically to the 5'-end of 16S ribosomal RNA. This Leptothrix cholodnii (strain ATCC 51168 / LMG 8142 / SP-6) (Leptothrix discophora (strain SP-6)) protein is Small ribosomal subunit protein uS17.